A 329-amino-acid polypeptide reads, in one-letter code: Sideroflexin-1.1 (329 aa).

The next 5 membrane-spanning stretches (helical) occupy residues 100 to 122 (MPGN…GVVF), 150 to 167 (LFVS…VALG), 178 to 198 (LAAR…NIPM), 232 to 254 (VTLS…MNRI), and 274 to 294 (IQTL…CALF).

Belongs to the sideroflexin family.

Its subcellular location is the mitochondrion inner membrane. It carries out the reaction L-serine(in) = L-serine(out). The catalysed reaction is L-alanine(in) = L-alanine(out). It catalyses the reaction L-cysteine(in) = L-cysteine(out). Its function is as follows. Amino acid transporter importing serine, an essential substrate of the mitochondrial branch of the one-carbon pathway, into mitochondria. Mitochondrial serine is then converted to glycine and formate, which exits to the cytosol where it is used to generate the charged folates that serve as one-carbon donors. May also transport other amino acids including alanine and cysteine. This is Sideroflexin-1.1 from Caenorhabditis elegans.